The sequence spans 1162 residues: Leptin receptor (1162 aa).

A signal peptide spans 1–21 (MMCQKFYVVLLHWEFLYVIAA). Topologically, residues 22–839 (LNLAYPISPW…AIDKQQNDAG (818 aa)) are extracellular. 5 cysteine pairs are disulfide-bonded: Cys37–Cys90, Cys89–Cys99, Cys131–Cys142, Cys186–Cys195, and Cys188–Cys193. N-linked (GlcNAc...) asparagine glycosylation is found at Asn41, Asn56, Asn73, and Asn98. Asn187 carries an N-linked (GlcNAc...) asparagine glycan. The region spanning 238 to 331 (PPLGLHMEVT…SPQVFTTQDV (94 aa)) is the Fibronectin type-III 1 domain. Asn275 and Asn345 each carry an N-linked (GlcNAc...) asparagine glycan. Positions 329-427 (QDVVYFPPKI…HRYAELYVID (99 aa)) constitute an Ig-like domain. 2 cysteine pairs are disulfide-bonded: Cys350–Cys410 and Cys411–Cys416. N-linked (GlcNAc...) asparagine glycosylation is present at Asn431. 3 disulfide bridges follow: Cys434–Cys445, Cys471–Cys526, and Cys486–Cys496. The leptin-binding stretch occupies residues 465–482 (HRRSLYCPDSPSIHPTSE). 8 N-linked (GlcNAc...) asparagine glycosylation sites follow: Asn514, Asn622, Asn657, Asn668, Asn686, Asn695, Asn698, and Asn726. Fibronectin type-III domains are found at residues 537–632 (PPSN…TLVM), 637–729 (PMRG…NLTF), and 738–832 (AVES…DAID). The short motif at 620–624 (WSNWS) is the WSXWS motif element. A helical transmembrane segment spans residues 840-860 (LYVIVPIIISSCVLLLGTLLI). The Cytoplasmic segment spans residues 861–1162 (SHQRMKKLFW…MENKMCDLTV (302 aa)). The Box 1 motif signature appears at 869-877 (FWDDVPNPK). Ser880 is modified (phosphoserine). The segment at 891–896 (ETFEHL) is required for JAK2 activation. Residues 896-904 (LFTKHAESV) form a required for STAT3 phosphorylation region. Phosphotyrosine; by JAK2 is present on Tyr985. Tyr1077 carries the post-translational modification Phosphotyrosine. Tyr1138 bears the Phosphotyrosine; by JAK2 mark.

It belongs to the type I cytokine receptor family. Type 2 subfamily. As to quaternary structure, present as a mixture of monomers and dimers. The phosphorylated receptor binds a number of SH2 domain-containing proteins such as JAK2, STAT3, PTPN11, and SOCS3. Interaction with SOCS3 inhibits JAK/STAT signaling and MAPK cascade. In terms of processing, on ligand binding, phosphorylated on two conserved C-terminal tyrosine residues (isoform B only) by JAK2. Tyr-985 is required for complete binding and activation of PTPN11, ERK/FOS activation,for interaction with SOCS3 and SOCS3 mediated inhibition of leptin signaling. Phosphorylation on Tyr-1138 is required for STAT3 binding/activation. Phosphorylation of Tyr-1077 has a more accessory role. In terms of tissue distribution, isoform A: highest level of expression in lung and kidney, also present in heart, brain, spleen, liver, muscle, choroid plexus and hypothalamus. Isoform B: highest levels of expression in hypothalamus and lower levels in brain, testes and adipose tissue. Expressed by neurons of the parabrachial nucleus. Expressed by peripheral blood mononuclear cells and CD4(+) T-cells. Isoform E: expressed in adipose tissue, liver, hypothalamus, cerebral microvessels, heart, and testes.

It localises to the cell membrane. It is found in the basolateral cell membrane. The protein localises to the secreted. Its function is as follows. Receptor for hormone LEP/leptin. On ligand binding, mediates LEP central and peripheral effects through the activation of different signaling pathways such as JAK2/STAT3 and MAPK cascade/FOS. In the hypothalamus, LEP acts as an appetite-regulating factor that induces a decrease in food intake and an increase in energy consumption by inducing anorexinogenic factors and suppressing orexigenic neuropeptides, also regulates bone mass and secretion of hypothalamo-pituitary-adrenal hormones. In the periphery, increases basal metabolism, influences reproductive function, regulates pancreatic beta-cell function and insulin secretion, is pro-angiogenic and affects innate and adaptive immunity. Control of energy homeostasis and melanocortin production (stimulation of POMC and full repression of AgRP transcription) is mediated by STAT3 signaling, whereas distinct signals regulate NPY and the control of fertility, growth and glucose homeostasis. Involved in the regulation of counter-regulatory response to hypoglycemia by inhibiting neurons of the parabrachial nucleus. Has a specific effect on T lymphocyte responses, differentially regulating the proliferation of naive and memory T-cells. Leptin increases Th1 and suppresses Th2 cytokine production. May transport LEP across the blood-brain barrier. Binds LEP and mediates LEP endocytosis. Does not induce phosphorylation of and activate STAT3. In terms of biological role, antagonizes Isoform A and isoform B-mediated LEP binding and endocytosis. This Mus musculus (Mouse) protein is Leptin receptor (Lepr).